Reading from the N-terminus, the 549-residue chain is Probable protein kinase UbiB (549 aa).

The Protein kinase domain occupies 123-501 (DFDNTPLASA…QQKAHKSNYL (379 aa)). Residues 129–137 (LASASISQV) and Lys-152 each bind ATP. Asp-287 (proton acceptor) is an active-site residue. A run of 2 helical transmembrane segments spans residues 498–518 (SNYL…LFNQ) and 520–540 (ATLW…LLGW).

It belongs to the ABC1 family. UbiB subfamily.

Its subcellular location is the cell inner membrane. The protein operates within cofactor biosynthesis; ubiquinone biosynthesis [regulation]. Functionally, is probably a protein kinase regulator of UbiI activity which is involved in aerobic coenzyme Q (ubiquinone) biosynthesis. This Shewanella woodyi (strain ATCC 51908 / MS32) protein is Probable protein kinase UbiB.